We begin with the raw amino-acid sequence, 134 residues long: Small ribosomal subunit protein uS11 (134 aa).

Residues 114-134 (SISDVTPQPHNGCRPPKRRRV) are disordered.

The protein belongs to the universal ribosomal protein uS11 family. In terms of assembly, part of the 30S ribosomal subunit. Interacts with proteins S7 and S18. Binds to IF-3.

Located on the platform of the 30S subunit, it bridges several disparate RNA helices of the 16S rRNA. Forms part of the Shine-Dalgarno cleft in the 70S ribosome. This is Small ribosomal subunit protein uS11 from Corynebacterium efficiens (strain DSM 44549 / YS-314 / AJ 12310 / JCM 11189 / NBRC 100395).